The following is an 827-amino-acid chain: Mitogen-activated protein kinase kinase kinase kinase 1 (827 aa).

Positions 17 to 274 constitute a Protein kinase domain; that stretch reads YDLLQRLGGG…ATKMLSHQLV (258 aa). ATP is bound by residues 23–31 and Lys46; that span reads LGGGTYGEV. Asp137 acts as the Proton acceptor in catalysis. A Phosphothreonine; by autocatalysis modification is found at Thr165. Ser171 is subject to Phosphoserine; by autocatalysis. Thr175 is subject to Phosphothreonine; by autocatalysis. Residues 296-315 are disordered; that stretch reads KGLPVDIEDEEPEPPPAIPR. The residue at position 354 (Thr354) is a Phosphothreonine; by autocatalysis. The segment at 359-485 is disordered; the sequence is PPAHFGSTSP…KMRGKMENEK (127 aa). 5 positions are modified to phosphoserine: Ser373, Ser375, Ser403, Ser405, and Ser419. A compositionally biased stretch (acidic residues) spans 374 to 383; that stretch reads DSDDDYDDVD. 2 stretches are compositionally biased toward pro residues: residues 429–443 and 461–471; these read GPPPRTPRPGPPPAT and APEPGQPPLVP. Basic and acidic residues predominate over residues 472 to 485; it reads PRKEKMRGKMENEK. The CNH domain occupies 501 to 806; sequence PLQIHSTAAW…TFRLLCSPRP (306 aa). Position 592 is a phosphoserine (Ser592).

It belongs to the protein kinase superfamily. STE Ser/Thr protein kinase family. STE20 subfamily. As to quaternary structure, interacts with MAP3K1. Interacts with FBXW8. Interacts with CLNK (via its SH2 domain). The cofactor is Mg(2+). Autophosphorylates: phosphorylation promotes ubiquitination by the Cul7-RING(FBXW8) ubiquitin-protein ligase complex, leading to its degradation by the proteasome. In terms of processing, tyrosine-phosphorylated after activation of hemopoietic cells. Post-translationally, ubiquitinated by the Cul7-RING(FBXW8) ubiquitin-protein ligase complex following autophosphorylation, leading to its degradation by the proteasome. In terms of tissue distribution, expressed in hemopoietic cells (at protein level). Ubiquitously expressed in all tissues examined at embryonic stage 16.5 dpc with high levels in lung, heart and fetal liver. In the neonate, expression is restricted to the tissues which undergo lineage decisions, lung, thymus, liver, kidney and brain. In the adult, expression is limited to hemopoietic organs, thymus, bone marrow, and spleen and to the testis.

It catalyses the reaction L-seryl-[protein] + ATP = O-phospho-L-seryl-[protein] + ADP + H(+). The catalysed reaction is L-threonyl-[protein] + ATP = O-phospho-L-threonyl-[protein] + ADP + H(+). In terms of biological role, serine/threonine-protein kinase, which plays a role in the response to environmental stress. Appears to act upstream of the JUN N-terminal pathway. Activator of the Hippo signaling pathway which plays a pivotal role in organ size control and tumor suppression by restricting proliferation and promoting apoptosis. MAP4Ks act in parallel to and are partially redundant with STK3/MST2 and STK4/MST2 in the phosphorylation and activation of LATS1/2, and establish MAP4Ks as components of the expanded Hippo pathway. May play a role in hematopoietic lineage decisions and growth regulation. Together with CLNK, it enhances CD3-triggered activation of T-cells and subsequent IL2 production. This Mus musculus (Mouse) protein is Mitogen-activated protein kinase kinase kinase kinase 1 (Map4k1).